We begin with the raw amino-acid sequence, 194 residues long: CSCSPVHPQQAFCNADIVIRAKAVNKKEVDSGNDIYGNPIKRIQYEIKQIKMFKGPDQDIEFIYTAPSSAVCGVSLDIGGKKEYLIAGKAEGNGNMHITLCDFIVPWDTLSATQKKSLNHRYQMGCECKITRCPMIPCYISSPDECLWMDWVTEKNINRHQAKFFACIKRSDGSCAWYRGAAPPKQEFLDIEDP.

Cys-1 serves as a coordination point for Zn(2+). Involved in metalloproteinase-binding regions lie at residues 1 to 4 (CSCS) and 69 to 70 (SA). 6 disulfide bridges follow: Cys-1–Cys-72, Cys-3–Cys-101, Cys-13–Cys-126, Cys-128–Cys-175, Cys-133–Cys-138, and Cys-146–Cys-167. In terms of domain architecture, NTR spans 1 to 126 (CSCSPVHPQQ…SLNHRYQMGC (126 aa)).

The protein belongs to the protease inhibitor I35 (TIMP) family. In terms of assembly, interacts (via the C-terminal) with MMP2 (via the C-terminal PEX domain); the interaction inhibits the MMP2 activity. In terms of processing, the activity of TIMP2 is dependent on the presence of disulfide bonds.

The protein localises to the secreted. Functionally, complexes with metalloproteinases (such as collagenases) and irreversibly inactivates them by binding to their catalytic zinc cofactor. This is Metalloproteinase inhibitor 2 (TIMP2) from Oryctolagus cuniculus (Rabbit).